An 882-amino-acid polypeptide reads, in one-letter code: Alanine--tRNA ligase (882 aa).

Histidine 567, histidine 571, cysteine 669, and histidine 673 together coordinate Zn(2+).

This sequence belongs to the class-II aminoacyl-tRNA synthetase family. It depends on Zn(2+) as a cofactor.

It localises to the cytoplasm. The enzyme catalyses tRNA(Ala) + L-alanine + ATP = L-alanyl-tRNA(Ala) + AMP + diphosphate. In terms of biological role, catalyzes the attachment of alanine to tRNA(Ala) in a two-step reaction: alanine is first activated by ATP to form Ala-AMP and then transferred to the acceptor end of tRNA(Ala). Also edits incorrectly charged Ser-tRNA(Ala) and Gly-tRNA(Ala) via its editing domain. The sequence is that of Alanine--tRNA ligase from Thermosynechococcus vestitus (strain NIES-2133 / IAM M-273 / BP-1).